We begin with the raw amino-acid sequence, 238 residues long: Probable transcriptional regulatory protein CPn_0573/CP_0176/CPj0573/CpB0595 (238 aa).

The interval 1–20 (MAGHSKWANTKHRKERADHK) is disordered. The span at 9–20 (NTKHRKERADHK) shows a compositional bias: basic residues.

The protein belongs to the TACO1 family.

The protein localises to the cytoplasm. In Chlamydia pneumoniae (Chlamydophila pneumoniae), this protein is Probable transcriptional regulatory protein CPn_0573/CP_0176/CPj0573/CpB0595.